Reading from the N-terminus, the 287-residue chain is Phosphatidylserine decarboxylase proenzyme (287 aa).

Residues aspartate 90, histidine 147, and serine 253 each act as charge relay system; for autoendoproteolytic cleavage activity in the active site. The active-site Schiff-base intermediate with substrate; via pyruvic acid; for decarboxylase activity is the serine 253. Serine 253 bears the Pyruvic acid (Ser); by autocatalysis mark.

This sequence belongs to the phosphatidylserine decarboxylase family. PSD-B subfamily. Prokaryotic type I sub-subfamily. As to quaternary structure, heterodimer of a large membrane-associated beta subunit and a small pyruvoyl-containing alpha subunit. Pyruvate is required as a cofactor. Post-translationally, is synthesized initially as an inactive proenzyme. Formation of the active enzyme involves a self-maturation process in which the active site pyruvoyl group is generated from an internal serine residue via an autocatalytic post-translational modification. Two non-identical subunits are generated from the proenzyme in this reaction, and the pyruvate is formed at the N-terminus of the alpha chain, which is derived from the carboxyl end of the proenzyme. The autoendoproteolytic cleavage occurs by a canonical serine protease mechanism, in which the side chain hydroxyl group of the serine supplies its oxygen atom to form the C-terminus of the beta chain, while the remainder of the serine residue undergoes an oxidative deamination to produce ammonia and the pyruvoyl prosthetic group on the alpha chain. During this reaction, the Ser that is part of the protease active site of the proenzyme becomes the pyruvoyl prosthetic group, which constitutes an essential element of the active site of the mature decarboxylase.

The protein localises to the cell membrane. It catalyses the reaction a 1,2-diacyl-sn-glycero-3-phospho-L-serine + H(+) = a 1,2-diacyl-sn-glycero-3-phosphoethanolamine + CO2. It participates in phospholipid metabolism; phosphatidylethanolamine biosynthesis; phosphatidylethanolamine from CDP-diacylglycerol: step 2/2. Its function is as follows. Catalyzes the formation of phosphatidylethanolamine (PtdEtn) from phosphatidylserine (PtdSer). In Aliivibrio fischeri (strain MJ11) (Vibrio fischeri), this protein is Phosphatidylserine decarboxylase proenzyme.